Consider the following 537-residue polypeptide: MTDTPRILITPSPLSDISTTINKPNVHPSMSLLKALPECRLVVKSKGDKNNANVVEFPLDRHKQLLIAGKVYHDYKFKPRKSIFDRVTDPNYFAKSEFRGFYVLFWLSMAAWVLQLYARSYWQRDTLLGLPLARQVFRQFFVLFSSDFLMICLSFFSYGLQVCIEKNMIRWANLGYTIQTLWQGFYMVLAVYWVKHRDFPIVQCVFFTLHCAVLIMKQFSYSHHMGYISEIRILHNEYEKLLKFVRECLNSTEKDEKYTFELTFPNKPAETISTLQAEEIVALTAKYLSRQMRSEVGNVVYPDNINFFNYVDYLLVPSLVYSMEFPRVAHFRWHYMAFKAGSTFGLLALTLALVDWYFVPSAVAVKDLDFIGKLRIAPLLMNKIMFPAIILYLIMFYLIFDCILNAFAEITKFADRGFYGAWWNTVTWDEFSREWNKPVHVFLMRHVYHSSISGFKLKKSHAVLLTFLISALVHEFVMLLATGKFRCYILTFQLLQIPLYDLQQMFAFKKRDILGNVFFWIGMFTGPSFLCILYIVF.

4 helical membrane-spanning segments follow: residues 98-118 (FRGFYVLFWLSMAAWVLQLYA), 140-160 (FFVLFSSDFLMICLSFFSYGL), 174-194 (LGYTIQTLWQGFYMVLAVYWV), and 199-219 (FPIVQCVFFTLHCAVLIMKQF). N-linked (GlcNAc...) asparagine glycosylation is present at asparagine 250. A run of 2 helical transmembrane segments spans residues 344–364 (FGLLALTLALVDWYFVPSAVA) and 384–404 (IMFPAIILYLIMFYLIFDCIL). An FYXDWWN motif motif is present at residues 418–424 (FYGAWWN). 2 helical membrane passes run 462–482 (AVLLTFLISALVHEFVMLLAT) and 517–537 (VFFWIGMFTGPSFLCILYIVF). The active site involves histidine 474.

The protein belongs to the membrane-bound acyltransferase family. Sterol o-acyltransferase subfamily.

Its subcellular location is the endoplasmic reticulum membrane. Sterol O-acyltransferase that catalyzes the formation of stery esters. The protein is Probable sterol O-acyltransferase 1 (are1) of Schizosaccharomyces pombe (strain 972 / ATCC 24843) (Fission yeast).